The primary structure comprises 179 residues: Large ribosomal subunit protein uL6 (179 aa).

This sequence belongs to the universal ribosomal protein uL6 family. As to quaternary structure, part of the 50S ribosomal subunit.

This protein binds to the 23S rRNA, and is important in its secondary structure. It is located near the subunit interface in the base of the L7/L12 stalk, and near the tRNA binding site of the peptidyltransferase center. The sequence is that of Large ribosomal subunit protein uL6 from Acaryochloris marina (strain MBIC 11017).